The primary structure comprises 173 residues: Crossover junction endodeoxyribonuclease RuvC (173 aa).

Catalysis depends on residues D8, E67, and D139. Mg(2+)-binding residues include D8, E67, and D139.

This sequence belongs to the RuvC family. As to quaternary structure, homodimer which binds Holliday junction (HJ) DNA. The HJ becomes 2-fold symmetrical on binding to RuvC with unstacked arms; it has a different conformation from HJ DNA in complex with RuvA. In the full resolvosome a probable DNA-RuvA(4)-RuvB(12)-RuvC(2) complex forms which resolves the HJ. The cofactor is Mg(2+).

Its subcellular location is the cytoplasm. The catalysed reaction is Endonucleolytic cleavage at a junction such as a reciprocal single-stranded crossover between two homologous DNA duplexes (Holliday junction).. Functionally, the RuvA-RuvB-RuvC complex processes Holliday junction (HJ) DNA during genetic recombination and DNA repair. Endonuclease that resolves HJ intermediates. Cleaves cruciform DNA by making single-stranded nicks across the HJ at symmetrical positions within the homologous arms, yielding a 5'-phosphate and a 3'-hydroxyl group; requires a central core of homology in the junction. The consensus cleavage sequence is 5'-(A/T)TT(C/G)-3'. Cleavage occurs on the 3'-side of the TT dinucleotide at the point of strand exchange. HJ branch migration catalyzed by RuvA-RuvB allows RuvC to scan DNA until it finds its consensus sequence, where it cleaves and resolves the cruciform DNA. The protein is Crossover junction endodeoxyribonuclease RuvC of Yersinia enterocolitica serotype O:8 / biotype 1B (strain NCTC 13174 / 8081).